A 554-amino-acid polypeptide reads, in one-letter code: Rab GTPase-binding effector protein 2 (554 aa).

Disordered regions lie at residues 1-28 (MAAA…SELS), 167-208 (IQRR…GPAA), and 371-395 (GLRA…DEAL). Over residues 14-28 (PQEKQKDASESSELS) the composition is skewed to basic and acidic residues. Residues 15 to 173 (QEKQKDASES…IQEIQRRPRQ (159 aa)) are a coiled coil. Residues S176, S180, S187, and S191 each carry the phosphoserine modification. The stretch at 274–509 (DSQWEQLQVE…QAELETSEQV (236 aa)) forms a coiled coil.

It belongs to the rabaptin family. In terms of assembly, heterodimer with RABGEF1. The dimer binds RAB5A that has been activated by GTP-binding. Interacts with SDCCAG8; this interaction is important for ciliogenesis regulation. Interacts with RAB4A; this interaction may mediate VEGFR2 cell surface expression.

Its subcellular location is the cytoplasm. It localises to the early endosome. It is found in the cytoskeleton. The protein localises to the microtubule organizing center. The protein resides in the centrosome. Its subcellular location is the cilium basal body. Plays a role in membrane trafficking and in homotypic early endosome fusion. Participates in arteriogenesis by regulating vascular endothelial growth factor receptor 2/VEGFR2 cell surface expression and endosomal trafficking. By interacting with SDCCAG8, localizes to centrosomes and plays a critical role in ciliogenesis. This is Rab GTPase-binding effector protein 2 (Rabep2) from Mus musculus (Mouse).